Here is a 458-residue protein sequence, read N- to C-terminus: Exodeoxyribonuclease 7 large subunit (458 aa).

This sequence belongs to the XseA family. As to quaternary structure, heterooligomer composed of large and small subunits.

It is found in the cytoplasm. It catalyses the reaction Exonucleolytic cleavage in either 5'- to 3'- or 3'- to 5'-direction to yield nucleoside 5'-phosphates.. In terms of biological role, bidirectionally degrades single-stranded DNA into large acid-insoluble oligonucleotides, which are then degraded further into small acid-soluble oligonucleotides. This Escherichia coli O17:K52:H18 (strain UMN026 / ExPEC) protein is Exodeoxyribonuclease 7 large subunit.